A 184-amino-acid chain; its full sequence is MATSNQLTPGMTLSINNKLYRVESSVKVTVPKGTPFIKAKLKDLSNNEMVEKSFKLNQPIKDVSLIERRLEFLYPEGDEYLFLDVVNLDQVLVPAEIVSGKVNYLKEGVEIKAFFYGETIFAVELPQFLELMVAKTHSDDENDLANGAKIAILETGAKIEVPPFIETGDIIKVDTKTDEYIQRV.

This sequence belongs to the elongation factor P family.

It localises to the cytoplasm. Its pathway is protein biosynthesis; polypeptide chain elongation. Functionally, involved in peptide bond synthesis. Stimulates efficient translation and peptide-bond synthesis on native or reconstituted 70S ribosomes in vitro. Probably functions indirectly by altering the affinity of the ribosome for aminoacyl-tRNA, thus increasing their reactivity as acceptors for peptidyl transferase. In Protochlamydia amoebophila (strain UWE25), this protein is Elongation factor P 1 (efp1).